The chain runs to 271 residues: Acetyl-coenzyme A carboxylase carboxyl transferase subunit alpha (271 aa).

One can recognise a CoA carboxyltransferase C-terminal domain in the interval M1 to E247.

It belongs to the AccA family. As to quaternary structure, acetyl-CoA carboxylase is a heterohexamer composed of biotin carboxyl carrier protein (AccB), biotin carboxylase (AccC) and two subunits each of ACCase subunit alpha (AccA) and ACCase subunit beta (AccD).

It localises to the cytoplasm. The catalysed reaction is N(6)-carboxybiotinyl-L-lysyl-[protein] + acetyl-CoA = N(6)-biotinyl-L-lysyl-[protein] + malonyl-CoA. It functions in the pathway lipid metabolism; malonyl-CoA biosynthesis; malonyl-CoA from acetyl-CoA: step 1/1. Its function is as follows. Component of the acetyl coenzyme A carboxylase (ACC) complex. First, biotin carboxylase catalyzes the carboxylation of biotin on its carrier protein (BCCP) and then the CO(2) group is transferred by the carboxyltransferase to acetyl-CoA to form malonyl-CoA. This Clostridium perfringens (strain 13 / Type A) protein is Acetyl-coenzyme A carboxylase carboxyl transferase subunit alpha.